A 479-amino-acid polypeptide reads, in one-letter code: Ribosomal RNA small subunit methyltransferase F (479 aa).

S-adenosyl-L-methionine contacts are provided by residues 125-131 (AAAPGSK), E149, D176, and D194. C247 (nucleophile) is an active-site residue.

It belongs to the class I-like SAM-binding methyltransferase superfamily. RsmB/NOP family.

It localises to the cytoplasm. It carries out the reaction cytidine(1407) in 16S rRNA + S-adenosyl-L-methionine = 5-methylcytidine(1407) in 16S rRNA + S-adenosyl-L-homocysteine + H(+). In terms of biological role, specifically methylates the cytosine at position 1407 (m5C1407) of 16S rRNA. This Salmonella enteritidis PT4 (strain P125109) protein is Ribosomal RNA small subunit methyltransferase F.